The chain runs to 348 residues: Protein RecA (348 aa).

An ATP-binding site is contributed by 64-71; that stretch reads GPESSGKT. The span at 326–335 shows a compositional bias: basic and acidic residues; the sequence is EIDGTNKEPL. Positions 326–348 are disordered; the sequence is EIDGTNKEPLDENEETLSLLDDE. Residues 336–348 are compositionally biased toward acidic residues; that stretch reads DENEETLSLLDDE.

The protein belongs to the RecA family.

The protein localises to the cytoplasm. In terms of biological role, can catalyze the hydrolysis of ATP in the presence of single-stranded DNA, the ATP-dependent uptake of single-stranded DNA by duplex DNA, and the ATP-dependent hybridization of homologous single-stranded DNAs. It interacts with LexA causing its activation and leading to its autocatalytic cleavage. This is Protein RecA from Listeria innocua serovar 6a (strain ATCC BAA-680 / CLIP 11262).